An 83-amino-acid chain; its full sequence is Putative membrane protein insertion efficiency factor (83 aa).

Residues 63-83 form a disordered region; it reads GGNDPVPDHFSLRRNKTDISD. The segment covering 68-83 has biased composition (basic and acidic residues); the sequence is VPDHFSLRRNKTDISD.

Belongs to the UPF0161 family.

The protein localises to the cell membrane. Could be involved in insertion of integral membrane proteins into the membrane. This Streptococcus agalactiae serotype III (strain NEM316) protein is Putative membrane protein insertion efficiency factor.